Reading from the N-terminus, the 97-residue chain is Bacterial microcompartment shell protein EutM (97 aa).

One can recognise a BMC domain in the interval 3 to 87; the sequence is ALGMIETRGL…PHGDLEEVFP (85 aa).

It belongs to the bacterial microcompartments protein family. As to quaternary structure, homohexamer with a central pore of up to 8.6 Angstroms diameter. The hexamers pack into a two-dimensional array. Interacts with EutQ.

It is found in the bacterial microcompartment. It participates in amine and polyamine degradation; ethanolamine degradation. Functionally, probably a major component of the bacterial microcompartment (BMC) shell dedicated to ethanolamine degradation. Each homohexamer has a central pore with an opening of up to 8.6 Angstroms. A positively-charged funnel leads to the pore from each side of the hexamer. The pore probably allows metabolite passage into and out of the BMC. The sequence is that of Bacterial microcompartment shell protein EutM (eutM) from Escherichia coli O6:H1 (strain CFT073 / ATCC 700928 / UPEC).